The primary structure comprises 55 residues: Neurotoxin B-II (55 aa).

A Hydroxyproline modification is found at proline 10. Intrachain disulfides connect cysteine 12-cysteine 48, cysteine 16-cysteine 52, cysteine 23-cysteine 41, and cysteine 26-cysteine 37.

It belongs to the worm B-toxin family.

The protein localises to the secreted. Functionally, this toxin increases the excitability of nerves by delaying the inactivation of the voltage-gated sodium channel (Nav). Only acts on some crustacean. Neurotoxin B-II is less abundant, but 15-fold more toxic than neurotoxin B-VI. This chain is Neurotoxin B-II, found in Cerebratulus lacteus (Milky ribbon worm).